The primary structure comprises 156 residues: Small ribosomal subunit protein uS7 (156 aa).

This sequence belongs to the universal ribosomal protein uS7 family. Part of the 30S ribosomal subunit. Contacts proteins S9 and S11.

In terms of biological role, one of the primary rRNA binding proteins, it binds directly to 16S rRNA where it nucleates assembly of the head domain of the 30S subunit. Is located at the subunit interface close to the decoding center, probably blocks exit of the E-site tRNA. This chain is Small ribosomal subunit protein uS7, found in Shigella dysenteriae serotype 1 (strain Sd197).